A 347-amino-acid polypeptide reads, in one-letter code: Protein RecA (347 aa).

Residue 65 to 72 participates in ATP binding; the sequence is GPESSGKT. The segment at 328 to 347 is disordered; sequence SPAQPEAPAAGEKPEQEEEF.

This sequence belongs to the RecA family.

It is found in the cytoplasm. Can catalyze the hydrolysis of ATP in the presence of single-stranded DNA, the ATP-dependent uptake of single-stranded DNA by duplex DNA, and the ATP-dependent hybridization of homologous single-stranded DNAs. It interacts with LexA causing its activation and leading to its autocatalytic cleavage. The chain is Protein RecA from Vibrio parahaemolyticus serotype O3:K6 (strain RIMD 2210633).